The primary structure comprises 143 residues: Cell division protein SepF (143 aa).

This sequence belongs to the SepF family. Homodimer. Interacts with FtsZ.

The protein resides in the cytoplasm. Functionally, cell division protein that is part of the divisome complex and is recruited early to the Z-ring. Probably stimulates Z-ring formation, perhaps through the cross-linking of FtsZ protofilaments. Its function overlaps with FtsA. The chain is Cell division protein SepF from Geobacillus thermodenitrificans (strain NG80-2).